The sequence spans 380 residues: Ceramide synthase 2 (380 aa).

At 1-40 (MLQTLYDYFWWERLWLPVNLTWADLEDRDGRVYAKASDLY) the chain is on the lumenal side. Asn-19 carries an N-linked (GlcNAc...) asparagine glycan. The chain crosses the membrane as a helical span at residues 41–61 (ITLPLALLFLIVRYFFELYVA). Residues 67–128 (LLNIKEKTRL…RRRRNQDRPS (62 aa)) form a homeobox-like region. Residues 131-332 (KKFREASWRF…ILRMAHKFIT (202 aa)) enclose the TLC domain. 4 helical membrane passes run 140 to 160 (FTFY…KPWF), 181 to 201 (WYYM…ASDV), 209 to 229 (QIIH…ANYI), and 264 to 284 (IFIV…PFWI). The Last loop motif signature appears at 291-300 (YPLELYPAFF). Residues 304–324 (FFNSMMGVLQLLHIFWAYLIL) form a helical membrane-spanning segment. Over 325–380 (RMAHKFITGKLVEDERSDREETESSEGEEAAAGGGAKSRPLANGHPILNNNHRKND) the chain is Cytoplasmic. The interval 338–380 (DERSDREETESSEGEEAAAGGGAKSRPLANGHPILNNNHRKND) is disordered. Phosphoserine is present on Ser-341. A compositionally biased stretch (acidic residues) spans 344-353 (EETESSEGEE). The residue at position 346 (Thr-346) is a Phosphothreonine. Residues Ser-348 and Ser-349 each carry the phosphoserine modification.

In terms of assembly, interacts with ATP6V0C, ASGR1, ASGR2 and SLC22A1/OCT1. Interacts with ELOV1, HSD17B12 and TECR. Interacts with NDUFS2. Interacts with PAQR4; the interaction regulates the stability and activity of CERS2 and is inhibited in presence of ceramides. In terms of processing, acetylated. Deacetylation by SIRT3 increases enzyme activity and promotes mitochondrial ceramide accumulation. Phosphorylated at the C-terminus by CK2, leading to increase the ceramide synthase activity. In terms of tissue distribution, expressed in kidney, liver, brain, heart, placenta and lung.

The protein resides in the endoplasmic reticulum membrane. It catalyses the reaction a very long-chain fatty acyl-CoA + a sphingoid base = an N-(very-long-chain fatty acyl)-sphingoid base + CoA + H(+). It carries out the reaction docosanoyl-CoA + sphinganine = N-docosanoylsphinganine + CoA + H(+). The enzyme catalyses tetracosanoyl-CoA + sphinganine = N-tetracosanoylsphinganine + CoA + H(+). The catalysed reaction is hexacosanoyl-CoA + sphinganine = N-hexacosanoylsphinganine + CoA + H(+). It catalyses the reaction (15Z)-tetracosenoyl-CoA + sphinganine = N-(15Z-tetracosenoyl)-sphinganine + CoA + H(+). It carries out the reaction 2-hydroxytetracosanoyl-CoA + sphinganine = N-(2-hydroxytetracosanoyl)-sphinganine + CoA + H(+). The enzyme catalyses 2-hydroxydocosanoyl-CoA + sphinganine = N-(2-hydroxydocosanoyl)-sphinganine + CoA + H(+). The catalysed reaction is 2-hydroxytetracosenoyl-CoA + sphinganine = N-(2-hydroxytetracosenoyl)-sphinganine + CoA + H(+). It catalyses the reaction tetracosenoyl-CoA + sphinganine = an N-tetracosenoylsphinganine + CoA + H(+). It carries out the reaction hexacosenoyl-CoA + sphinganine = N-hexacosenoylsphinganine + CoA + H(+). The enzyme catalyses tetracosanoyl-CoA + sphing-4-enine = N-tetracosanoyl-sphing-4-enine + CoA + H(+). The catalysed reaction is tetracosenoyl-CoA + sphing-4-enine = N-(tetracosenoyl)-sphing-4-enine + CoA + H(+). It catalyses the reaction heptadecasphing-4-enine + tetracosanoyl-CoA = N-tetracosanoyl-heptadecasphing-4-enine + CoA + H(+). It carries out the reaction a fatty acyl-CoA + sphing-4-enine = an N-acylsphing-4-enine + CoA + H(+). The enzyme catalyses sphing-4-enine + hexadecanoyl-CoA = N-hexadecanoylsphing-4-enine + CoA + H(+). The catalysed reaction is sphing-4-enine + octadecanoyl-CoA = N-octadecanoylsphing-4-enine + CoA + H(+). It catalyses the reaction eicosanoyl-CoA + sphing-4-enine = N-eicosanoyl-sphing-4-enine + CoA + H(+). It carries out the reaction sphinganine + hexadecanoyl-CoA = N-hexadecanoylsphinganine + CoA + H(+). The enzyme catalyses sphinganine + octadecanoyl-CoA = N-(octadecanoyl)-sphinganine + CoA + H(+). The catalysed reaction is sphinganine + (9Z)-octadecenoyl-CoA = N-(9Z-octadecenoyl)-sphinganine + CoA + H(+). It catalyses the reaction eicosanoyl-CoA + sphinganine = N-eicosanoylsphinganine + CoA + H(+). The protein operates within lipid metabolism; sphingolipid metabolism. With respect to regulation, ceramide synthase activity is inhibited by sphingosine-1-phosphate. Functionally, ceramide synthase that catalyzes the transfer of the acyl chain from acyl-CoA to a sphingoid base, with high selectivity toward very-long-chain fatty acyl-CoA (chain length C22-C27). N-acylates sphinganine and sphingosine bases to form dihydroceramides and ceramides in de novo synthesis and salvage pathways, respectively. Plays a non-redundant role in the synthesis of ceramides with very-long-chain fatty acids in kidney, liver and brain. Regulates the abundance of myelin-specific sphingolipids galactosylceramide and sulfatide that affects myelin sheath architecture and motor neuron functions. This is Ceramide synthase 2 from Homo sapiens (Human).